Consider the following 240-residue polypeptide: MQVTVLSGAGISAESGVPTFRDAETGLWAQVDPYEISSTDGWQRNPEKVWAWYLWRHYMMARVAPNEAHRTVAAWEDHLDVRVVTQNIDDLHERAGSTNVYHLHGSLFEFRCDACGSAFEGNLPEMPEPVETIDPPVCPCSGLIRPSVVWFGEPLPDAAWNRSVLAVSSADVVIVVGTSSIVYPAAGLPEAALAAGKPVIEVNPERTPLSDSATVSLRETASEALPTLLQRLPELLNRSA.

The Deacetylase sirtuin-type domain occupies 1 to 235 (MQVTVLSGAG…PTLLQRLPEL (235 aa)). 8-28 (GAGISAESGVPTFRDAETGLW) contributes to the NAD(+) binding site. The substrate site is built by Y53 and R56. 86 to 89 (QNID) provides a ligand contact to NAD(+). The active-site Proton acceptor is H104. C112, C115, C138, and C140 together coordinate Zn(2+). NAD(+)-binding positions include 177 to 179 (GTS), 203 to 205 (NPE), and A221.

This sequence belongs to the sirtuin family. Class III subfamily. As to quaternary structure, interacts with both Ku and LigD; may form a trimeric complex during NHEJ. Zn(2+) serves as cofactor.

Its subcellular location is the cytoplasm. It catalyses the reaction N(6)-succinyl-L-lysyl-[protein] + NAD(+) + H2O = 2''-O-succinyl-ADP-D-ribose + nicotinamide + L-lysyl-[protein]. It carries out the reaction N(6)-acetyl-L-lysyl-[protein] + NAD(+) + H2O = 2''-O-acetyl-ADP-D-ribose + nicotinamide + L-lysyl-[protein]. In terms of biological role, NAD-dependent lysine deacetylase and desuccinylase that specifically removes acetyl and succinyl groups on target proteins. Modulates the activities of several proteins which are inactive in their acylated form. Its function is as follows. Involved in non-homologous end joining (NHEJ) repair of blunt, 5' overhang and 3' overhang DNA double strand breaks (DSB). Overexpression increases the efficiency of NHEJ of the above DSBs 2-fold with no effect on repair fidelity. This is NAD-dependent protein deacylase Sir2 (sir2) from Mycolicibacterium smegmatis (strain ATCC 700084 / mc(2)155) (Mycobacterium smegmatis).